Consider the following 157-residue polypeptide: 2-C-methyl-D-erythritol 2,4-cyclodiphosphate synthase (157 aa).

A divalent metal cation is bound by residues D8 and H10. Residues 8-10 (DVH) and 34-35 (HS) contribute to the 4-CDP-2-C-methyl-D-erythritol 2-phosphate site. H42 is an a divalent metal cation binding site. 4-CDP-2-C-methyl-D-erythritol 2-phosphate contacts are provided by residues 56–58 (DIG), 61–65 (FPDTD), 100–106 (AQAPKMA), 132–135 (TTTE), F139, and R142.

It belongs to the IspF family. In terms of assembly, homotrimer. The cofactor is a divalent metal cation.

It carries out the reaction 4-CDP-2-C-methyl-D-erythritol 2-phosphate = 2-C-methyl-D-erythritol 2,4-cyclic diphosphate + CMP. It functions in the pathway isoprenoid biosynthesis; isopentenyl diphosphate biosynthesis via DXP pathway; isopentenyl diphosphate from 1-deoxy-D-xylulose 5-phosphate: step 4/6. Its function is as follows. Involved in the biosynthesis of isopentenyl diphosphate (IPP) and dimethylallyl diphosphate (DMAPP), two major building blocks of isoprenoid compounds. Catalyzes the conversion of 4-diphosphocytidyl-2-C-methyl-D-erythritol 2-phosphate (CDP-ME2P) to 2-C-methyl-D-erythritol 2,4-cyclodiphosphate (ME-CPP) with a corresponding release of cytidine 5-monophosphate (CMP). This Pseudomonas fluorescens (strain ATCC BAA-477 / NRRL B-23932 / Pf-5) protein is 2-C-methyl-D-erythritol 2,4-cyclodiphosphate synthase.